Reading from the N-terminus, the 221-residue chain is Large ribosomal subunit protein uL3 (221 aa).

The disordered stretch occupies residues 123-156; it reads GFAGSIKRHNQSRGPESHGSRYHRRPGSMGPIKG.

The protein belongs to the universal ribosomal protein uL3 family. Part of the 50S ribosomal subunit. Forms a cluster with proteins L14 and L19.

In terms of biological role, one of the primary rRNA binding proteins, it binds directly near the 3'-end of the 23S rRNA, where it nucleates assembly of the 50S subunit. This chain is Large ribosomal subunit protein uL3, found in Aster yellows witches'-broom phytoplasma (strain AYWB).